The sequence spans 344 residues: Dihydroorotase (344 aa).

Zn(2+) is bound by residues histidine 13 and histidine 15. Residues histidine 15–arginine 17 and asparagine 41 contribute to the substrate site. Zn(2+) is bound by residues lysine 99, histidine 136, and histidine 174. Residue lysine 99 is modified to N6-carboxylysine. Histidine 136 is a binding site for substrate. A substrate-binding site is contributed by leucine 219. Aspartate 247 contributes to the Zn(2+) binding site. Aspartate 247 is a catalytic residue. Positions 251 and 263 each coordinate substrate.

Belongs to the metallo-dependent hydrolases superfamily. DHOase family. Class II DHOase subfamily. As to quaternary structure, homodimer. Zn(2+) is required as a cofactor.

The enzyme catalyses (S)-dihydroorotate + H2O = N-carbamoyl-L-aspartate + H(+). It participates in pyrimidine metabolism; UMP biosynthesis via de novo pathway; (S)-dihydroorotate from bicarbonate: step 3/3. Its function is as follows. Catalyzes the reversible cyclization of carbamoyl aspartate to dihydroorotate. This Acinetobacter baylyi (strain ATCC 33305 / BD413 / ADP1) protein is Dihydroorotase.